Here is a 421-residue protein sequence, read N- to C-terminus: Protein FAM110C (421 aa).

Disordered stretches follow at residues 1–36 (MRAL…NKSA), 51–80 (TLGS…PSAL), and 141–266 (TTRV…PASM). 3 stretches are compositionally biased toward basic and acidic residues: residues 143 to 155 (RVAD…KETE), 185 to 202 (PAEK…KETE), and 232 to 249 (PAEK…KETE). The residue at position 350 (Ser350) is a Phosphoserine.

Belongs to the FAM110 family. As to quaternary structure, interacts with AKT1; the interaction is transient and follows AKT1 activation. Interacts with PPP2CA and alpha-tubulin.

It localises to the cytoplasm. The protein resides in the cytoskeleton. The protein localises to the microtubule organizing center. Its subcellular location is the centrosome. It is found in the spindle pole. It localises to the nucleus. In terms of biological role, may play a role in microtubule organization. May play a role in cell spreading and cell migration of epithelial cells; the function may involve the AKT1 signaling pathway. The polypeptide is Protein FAM110C (Fam110c) (Mus musculus (Mouse)).